The following is a 71-amino-acid chain: Small ribosomal subunit protein bS21 (71 aa).

The protein belongs to the bacterial ribosomal protein bS21 family.

The polypeptide is Small ribosomal subunit protein bS21 (Nitrosococcus oceani (strain ATCC 19707 / BCRC 17464 / JCM 30415 / NCIMB 11848 / C-107)).